Here is a 207-residue protein sequence, read N- to C-terminus: Ribosomal RNA large subunit methyltransferase E (207 aa).

Residues glycine 60, tryptophan 62, aspartate 80, aspartate 96, and aspartate 121 each contribute to the S-adenosyl-L-methionine site. Lysine 161 acts as the Proton acceptor in catalysis.

Belongs to the class I-like SAM-binding methyltransferase superfamily. RNA methyltransferase RlmE family.

The protein localises to the cytoplasm. It catalyses the reaction uridine(2552) in 23S rRNA + S-adenosyl-L-methionine = 2'-O-methyluridine(2552) in 23S rRNA + S-adenosyl-L-homocysteine + H(+). Specifically methylates the uridine in position 2552 of 23S rRNA at the 2'-O position of the ribose in the fully assembled 50S ribosomal subunit. The polypeptide is Ribosomal RNA large subunit methyltransferase E (Methylobacillus flagellatus (strain ATCC 51484 / DSM 6875 / VKM B-1610 / KT)).